The chain runs to 1318 residues: Maestro heat-like repeat family member 5 (1318 aa).

A disordered region spans residues 1 to 38 (MDRQCSERPYSCTPTGRVSSAVSQNSRISPPVSTSMKD). Over residues 12–38 (CTPTGRVSSAVSQNSRISPPVSTSMKD) the composition is skewed to polar residues. The HEAT 1 repeat unit spans residues 581 to 618 (DELHFLLSHLYIWLASEKAHERQRAVHSCMILLKFLNH). Residues 676–695 (ESQAPKELSQAHSDGAPLWN) are disordered. 8 HEAT repeats span residues 769 to 811 (GAKL…SHTC), 840 to 880 (PTSH…LLAA), 996 to 1033 (RQIPAVLRQLLPSLQSPQERERKVAILILTKFLYSPVL), 1037 to 1074 (LPKQAALTVLAQGLHDPSPEVRVLSLQGLSNILFHPDK), 1076 to 1113 (SLLQGQLRPLLDGFFQSSDQVIVCIMGTVSDTLHRLGA), 1118 to 1155 (SQSLGVAISTRSFFNDERDGIRAAAMALFGDLVAAMAD), 1164 to 1200 (QVHQSMVPLLLHLKDQCPAVATQAKFTFYRCAVLLRW), and 1278 to 1315 (VDTNLLFRTFEHLRSDPEPSIREFATSQLSFLQKVSAR).

The polypeptide is Maestro heat-like repeat family member 5 (MROH5) (Homo sapiens (Human)).